An 87-amino-acid polypeptide reads, in one-letter code: MMQHQVNVSARFNPETLERVLRVVRHRGFHVCSMNMAAASDAQNINIELTVASPRSVDLLFSQLNKLVDVAHVAICQSTTTSQQIRA.

Positions glutamine 5–serine 78 constitute an ACT domain.

Tetramer of two large and two small chains. The cofactor is Mg(2+). It depends on thiamine diphosphate as a cofactor.

It carries out the reaction 2 pyruvate + H(+) = (2S)-2-acetolactate + CO2. The protein operates within amino-acid biosynthesis; L-isoleucine biosynthesis; L-isoleucine from 2-oxobutanoate: step 1/4. Its pathway is amino-acid biosynthesis; L-valine biosynthesis; L-valine from pyruvate: step 1/4. The sequence is that of Acetolactate synthase isozyme 2 small subunit (ilvM) from Escherichia coli O6:H1 (strain CFT073 / ATCC 700928 / UPEC).